The primary structure comprises 1722 residues: Signal-induced proliferation-associated 1-like protein 2 (1722 aa).

Over residues 1-12 (MSDPRQSQEEKH) the composition is skewed to basic and acidic residues. Disordered stretches follow at residues 1–29 (MSDPRQSQEEKHKLGRASSKFKDPPRIMQ) and 42–72 (NGNMGPTTSLNASNSNETGGGGPANGTPAVP). A compositionally biased stretch (polar residues) spans 45-56 (MGPTTSLNASNS). A Phosphoserine modification is found at serine 148. Positions 360 to 377 (GASAASQTQMPTGQTGNC) are enriched in polar residues. Residues 360-401 (GASAASQTQMPTGQTGNCESPLGSKEDLNSKENLDADEGDGK) form a disordered region. A phosphoserine mark is found at serine 379 and serine 383. The segment covering 383-401 (SKEDLNSKENLDADEGDGK) has biased composition (basic and acidic residues). The region spanning 595-812 (LLKLDEQGLS…RTRQEYLKDL (218 aa)) is the Rap-GAP domain. Positions 950–1026 (EMTLRRNGLG…VKVVIIQPHD (77 aa)) constitute a PDZ domain. Serine 1029 carries the phosphoserine modification. 2 disordered regions span residues 1067-1245 (HRVP…FGSG) and 1330-1360 (EGSMGDLSEISSHSSGSHHSGSPSAHCSKSS). Low complexity-rich tracts occupy residues 1093-1102 (QQLLQQAQAA) and 1119-1130 (SSPSNQSSSSDP). Basic and acidic residues-rich tracts occupy residues 1164-1183 (DGAREREDTMEASRHPETKW) and 1194-1217 (YKERALQKDGSCKDSPNKLSHIGD). Over residues 1219–1236 (SCSSHSSSNTLSSNTSSN) the composition is skewed to low complexity. The residue at position 1244 (serine 1244) is a Phosphoserine. Positions 1337 to 1360 (SEISSHSSGSHHSGSPSAHCSKSS) are enriched in low complexity. Phosphoserine occurs at positions 1461, 1472, 1478, 1488, 1549, 1552, and 1591. Positions 1654-1712 (LTGKVNQLELILRQLQTDLRKEKQDKAVLQAEVQHLRQDNMRLQEESQTATAQLRKFTE) form a coiled coil.

The protein is Signal-induced proliferation-associated 1-like protein 2 (SIPA1L2) of Homo sapiens (Human).